A 388-amino-acid polypeptide reads, in one-letter code: Gastricsin (388 aa).

The N-terminal stretch at 1–16 is a signal peptide; it reads MKWLLVALVCLHLLEA. A propeptide spans 17–59 (activation peptide); that stretch reads AVIKVPLRKFKSIRETLKEKGLLKEFLNTHKYDPALKYRFGDF. The Peptidase A1 domain maps to 73–385; the sequence is YFGEISIGTP…DMANNRVGFA (313 aa). D91 is a catalytic residue. 2 disulfides stabilise this stretch: C104-C109 and C267-C271. D276 is an active-site residue. A disulfide bridge connects residues C310 and C343.

Belongs to the peptidase A1 family.

It localises to the secreted. It catalyses the reaction More restricted specificity than pepsin A, but shows preferential cleavage at Tyr-|-Xaa bonds. High activity on hemoglobin.. Hydrolyzes a variety of proteins. The polypeptide is Gastricsin (PGC) (Oryctolagus cuniculus (Rabbit)).